Here is a 118-residue protein sequence, read N- to C-terminus: Ribonuclease P protein component (118 aa).

The protein belongs to the RnpA family. In terms of assembly, consists of a catalytic RNA component (M1 or rnpB) and a protein subunit.

It catalyses the reaction Endonucleolytic cleavage of RNA, removing 5'-extranucleotides from tRNA precursor.. RNaseP catalyzes the removal of the 5'-leader sequence from pre-tRNA to produce the mature 5'-terminus. It can also cleave other RNA substrates such as 4.5S RNA. The protein component plays an auxiliary but essential role in vivo by binding to the 5'-leader sequence and broadening the substrate specificity of the ribozyme. The chain is Ribonuclease P protein component from Mycoplasma pneumoniae (strain ATCC 29342 / M129 / Subtype 1) (Mycoplasmoides pneumoniae).